A 357-amino-acid chain; its full sequence is Uroporphyrinogen decarboxylase (357 aa).

Residues 27-31, Asp-77, Tyr-154, Ser-209, and His-330 contribute to the substrate site; that span reads RQAGR.

The protein belongs to the uroporphyrinogen decarboxylase family. As to quaternary structure, homodimer.

The protein localises to the cytoplasm. It carries out the reaction uroporphyrinogen III + 4 H(+) = coproporphyrinogen III + 4 CO2. Its pathway is porphyrin-containing compound metabolism; protoporphyrin-IX biosynthesis; coproporphyrinogen-III from 5-aminolevulinate: step 4/4. In terms of biological role, catalyzes the decarboxylation of four acetate groups of uroporphyrinogen-III to yield coproporphyrinogen-III. In Acinetobacter baumannii (strain ATCC 17978 / DSM 105126 / CIP 53.77 / LMG 1025 / NCDC KC755 / 5377), this protein is Uroporphyrinogen decarboxylase.